An 844-amino-acid polypeptide reads, in one-letter code: Beta-mannosidase B (844 aa).

E432 serves as the catalytic Proton donor. The N-linked (GlcNAc...) asparagine glycan is linked to N723.

Belongs to the glycosyl hydrolase 2 family. Beta-mannosidase B subfamily.

It carries out the reaction Hydrolysis of terminal, non-reducing beta-D-mannose residues in beta-D-mannosides.. Its pathway is glycan metabolism; N-glycan degradation. In terms of biological role, exoglycosidase that cleaves the single beta-linked mannose residue from the non-reducing end of beta-mannosidic oligosaccharides of various complexity and length. Prefers mannobiose over mannotriose and has no activity against polymeric mannan. Is also severely restricted by galactosyl substitutions at the +1 subsite. In Aspergillus niger (strain ATCC MYA-4892 / CBS 513.88 / FGSC A1513), this protein is Beta-mannosidase B (mndB).